The chain runs to 526 residues: Tyrosine-protein kinase transforming protein Src (526 aa).

Residues 1–52 (MGSSKSKPKDPSQRRRSLEPPDSTHHGGFPASQTPDETAAPDAHRNPSRSFG) form a disordered region. A lipid anchor (N-myristoyl glycine; by host) is attached at Gly2. Positions 7–25 (KPKDPSQRRRSLEPPDSTH) are enriched in basic and acidic residues. Residues 81 to 142 (GGVTTFVALY…PSNYVAPSDS (62 aa)) form the SH3 domain. The region spanning 148 to 245 (WYFGKITRRE…GLCHRLTNVC (98 aa)) is the SH2 domain. The Protein kinase domain maps to 267–517 (LRLEAKLGQG…TFKYLQAQLL (251 aa)). Residues 273–281 (LGQGCFGEV) and Lys295 each bind ATP. Asp386 (proton acceptor) is an active-site residue. Tyr416 bears the Phosphotyrosine; by autocatalysis mark.

The protein belongs to the protein kinase superfamily. Tyr protein kinase family. SRC subfamily. Mn(2+) serves as cofactor. In terms of processing, the phosphorylated form is termed pp60v-src.

It catalyses the reaction L-tyrosyl-[protein] + ATP = O-phospho-L-tyrosyl-[protein] + ADP + H(+). In terms of biological role, this phosphoprotein, required for both the initiation and the maintenance of neoplastic transformation, is a protein kinase that catalyzes the phosphorylation of tyrosine residues in vitro. This Gallus gallus (Chicken) protein is Tyrosine-protein kinase transforming protein Src (V-SRC).